The primary structure comprises 130 residues: U-scoloptoxin(16)-Er4a (130 aa).

The N-terminal stretch at 1 to 26 (MNTVSVVQFLAVGCAVFVLYGRGVFA) is a signal peptide.

This sequence belongs to the scoloptoxin-16 family. Contains 3 disulfide bonds. As to expression, expressed by the venom gland.

Its subcellular location is the secreted. In Ethmostigmus rubripes (Giant centipede), this protein is U-scoloptoxin(16)-Er4a.